The chain runs to 614 residues: Serine/threonine-protein kinase-like protein E (614 aa).

A Protein kinase domain is found at 15–404 (YLIQLHLGQN…NPNTNGAPLS (390 aa)). 21 to 29 (LGQNSLGQQ) is an ATP binding site. Residues 256–269 (PEQTDNGVGKSSTG) are compositionally biased toward polar residues. The segment at 256 to 284 (PEQTDNGVGKSSTGEPPFPTVHQSPESSS) is disordered.

It belongs to the protein kinase superfamily. Ser/Thr protein kinase family.

In terms of biological role, lacks protein kinase activity. The chain is Serine/threonine-protein kinase-like protein E (spkE) from Synechocystis sp. (strain ATCC 27184 / PCC 6803 / Kazusa).